The sequence spans 340 residues: Extracellular matrix protein-binding protein emp (340 aa).

The signal sequence occupies residues Met-1–Ala-26.

It is found in the cell surface. Adhesin that binds to the host cell extracellular matrix proteins fibronectin, fibrinogen, collagen, and vitronectin. The chain is Extracellular matrix protein-binding protein emp (emp) from Staphylococcus aureus.